We begin with the raw amino-acid sequence, 1007 residues long: Ephrin type-A receptor 10 (1007 aa).

The first 22 residues, 1-22 (METGAGPHPLRLFVCLIPLCLA), serve as a signal peptide directing secretion. The Extracellular segment spans residues 23-565 (LLLGPGRPGT…APGSRDQSPA (543 aa)). The Eph LBD domain maps to 35–216 (EVILLDSKAS…YYKQCRATVR (182 aa)). N311 carries N-linked (GlcNAc...) asparagine glycosylation. Disordered regions lie at residues 323 to 343 (ARSP…APRD) and 467 to 486 (PQSV…PGTN). 2 consecutive Fibronectin type-III domains span residues 340–452 (APRD…TGPG) and 456–554 (EEDE…TPGE). N-linked (GlcNAc...) asparagine glycosylation is present at N486. Residues 566 to 586 (VVVTVVTISALLVLGSVMSVL) traverse the membrane as a helical segment. Residues 587-1007 (AIWRRPCDGK…LQLQGQGVQV (421 aa)) are Cytoplasmic-facing. Residues 644-899 (VTLEKSLGAG…PRFSQIHSIL (256 aa)) enclose the Protein kinase domain. Residues 932–996 (PSFGSVGAWL…LSGISALQTR (65 aa)) form the SAM domain.

This sequence belongs to the protein kinase superfamily. Tyr protein kinase family. Ephrin receptor subfamily. As to expression, expressed in the cochlea, in the organ of Corti, spiral ganglion, and stria vascularis.

The protein localises to the cell membrane. The enzyme catalyses L-tyrosyl-[protein] + ATP = O-phospho-L-tyrosyl-[protein] + ADP + H(+). Receptor for members of the ephrin-A family. Binds to EFNA3, EFNA4 and EFNA5. The polypeptide is Ephrin type-A receptor 10 (Epha10) (Mus musculus (Mouse)).